A 54-amino-acid polypeptide reads, in one-letter code: Large ribosomal subunit protein bL33 (54 aa).

Belongs to the bacterial ribosomal protein bL33 family.

This Herpetosiphon aurantiacus (strain ATCC 23779 / DSM 785 / 114-95) protein is Large ribosomal subunit protein bL33.